Here is a 341-residue protein sequence, read N- to C-terminus: Zinc transporter ZIP11 (341 aa).

A run of 7 helical transmembrane segments spans residues 12–32 (LLGT…VFVF), 44–64 (LGFA…APAV), 72–92 (GFGS…AAFV), 193–213 (IALL…AVGV), 262–284 (FWYG…FAVV), 289–306 (ILPY…YVIM), and 321–341 (LASW…VGLG).

This sequence belongs to the ZIP transporter (TC 2.A.5) family.

The protein localises to the cell membrane. The protein resides in the nucleus. It localises to the cytoplasm. Its subcellular location is the golgi apparatus. It carries out the reaction Zn(2+)(in) = Zn(2+)(out). The enzyme catalyses Cu(2+)(in) = Cu(2+)(out). Functionally, zinc importer that regulates cytosolic zinc concentrations either via zinc influx from the extracellular compartment or efflux from intracellular organelles such as Golgi apparatus. May transport copper ions as well. The transport mechanism remains to be elucidated. In Bos taurus (Bovine), this protein is Zinc transporter ZIP11 (SLC39A11).